The sequence spans 422 residues: Phospho-N-acetylmuramoyl-pentapeptide-transferase (422 aa).

The next 9 membrane-spanning stretches (helical) occupy residues 28–48, 71–91, 95–115, 136–156, 211–231, 246–266, 279–299, 313–333, and 399–419; these read LMAI…FINL, VGVP…PCLL, LHNI…SLGF, IIGQ…SPDV, AGWI…SNGA, AIIG…EFAG, LVIF…YNAY, IGGI…IPIL, and KITV…IITL.

This sequence belongs to the glycosyltransferase 4 family. MraY subfamily. The cofactor is Mg(2+).

The protein localises to the cell inner membrane. It carries out the reaction UDP-N-acetyl-alpha-D-muramoyl-L-alanyl-gamma-D-glutamyl-meso-2,6-diaminopimeloyl-D-alanyl-D-alanine + di-trans,octa-cis-undecaprenyl phosphate = di-trans,octa-cis-undecaprenyl diphospho-N-acetyl-alpha-D-muramoyl-L-alanyl-D-glutamyl-meso-2,6-diaminopimeloyl-D-alanyl-D-alanine + UMP. Its pathway is cell wall biogenesis; peptidoglycan biosynthesis. In terms of biological role, catalyzes the initial step of the lipid cycle reactions in the biosynthesis of the cell wall peptidoglycan: transfers peptidoglycan precursor phospho-MurNAc-pentapeptide from UDP-MurNAc-pentapeptide onto the lipid carrier undecaprenyl phosphate, yielding undecaprenyl-pyrophosphoryl-MurNAc-pentapeptide, known as lipid I. The sequence is that of Phospho-N-acetylmuramoyl-pentapeptide-transferase from Bacteroides fragilis (strain ATCC 25285 / DSM 2151 / CCUG 4856 / JCM 11019 / LMG 10263 / NCTC 9343 / Onslow / VPI 2553 / EN-2).